Reading from the N-terminus, the 1581-residue chain is MEAEEPEYGVSTEVPDIEELKTIPEGIMRSSQIPALDPEAQEDRDPSYKWTDGHRPVMNQSKVLRDMGDHTPNSMAIFFKKESSDMETSQEILLAEACNTPDQQEAVIQSLKDRLSRTIAAPELLACAVQEEWLDIPSKLDNRVGAELQSELMSLTLAVSKEKEEEETSPDTSIPRGSWPPCKTHPGETEQTQGSGSELLRQGKQLQLEATQENQGQEGFLQSQEAQGLEEQEGQEVEIQEEGTLNEGICFGGLLGEQEEVEEGFNGNEEEQKQGQIQSYMLLGGQWENEGLSGELEGLNYSERGQENRERRVWVLRDSEEEGQDQESREVEERRVATQYTENQRLVEKSEIVKRKQRDHDQTGKVMPVRDQKEVVDSGDRVQGNGDSGGQTAVEGSRPGEDSKPSLPVASVDPEVLSPGTLFPGISSSVADIPQIQKEPVCEELSPQAPALEPTEWSHQPISPPASFAPEESLDNRTHNSQQEEFRLRKGIEVVSASTSVAPSGTRDSPPFSPPNVFSSTATLSPVSSSVILPEETPTASASADTPHHCGPCETPPLPAKSSRYPCATSDTANPHSPLSSYTGVTQHLRSNSFPGSHRTEQTPDSLGMSLSFSHLELPQRPPKPAIYGSLTPRRNRRSRDGIVFSDSSTALFALKQDSEEFTSNPERPSSPHGSPTWGSPQNSAFAIGSPANVSSPPTVSMDMTIREALLPIPPEKRHSYSHIVERDGLLHEVASTLKRHSHPPPLTLSSGLHRSSKGSFSLVPDSTVARQHRPLPSTPESPNHTQTSIPSRLRYNKPLPPTPDMPEFYHPSISSSYISRMYRPLPPVPIIDPSSEPPPLPPKSRGRSKSIQGGVIHSGGQAKPRPNNQDWTASTLSVGRTSWPPATGRSTESLPLTSRCNNEVSPGLAFSNMTNLLSPSSPTTPWIPDLQRPTTKDESGLTEESEPPVRGSFRRSAPQEEFNNTRRSALGSRKNSEKPLHHQLEKASSWPHRRDPARTSESSSEQVVLGQVPNKQKGWNRQGLRRPSILPESSSDLRNPAAGRLPGSSDSVVFREKKPKEGMGGFSRRCSKLISSQLLYQEYSDVVLNKEIQSQQRLDSLAEPHGLSSPRHRRKALVSSDSYLQRLSMASSGSLWQEIPVVRNSTVLLSMTHEDQKLQEAKFELIVSEASYLRSLNIAVDHFQHSAQLRGTLSNQDHQWLFSRLQDVRDVSTTFLSDLEENFENNIFSFQVCDVVLNHAADFHRVYLPYVTNQTYQERTFQSLMNSNSSFREVLEKLESDPICQRLSLKSFLILPFQRITRLKLLLQNILKRTQPGSSEEAEATKAHHALEKLIRDCNSNVQRMRRTEELIYLSQKIEFECKIFPLISQSRWLVKSGELTALEFSVSPGLRRKLTTRPVHLHLFNDCLLLSRPREGSRFLVFDHAPFSSIRGEKCEMKLHGPHKNLFRLFLLHNAQGTQVEFLFRTETQSEKLRWISALAMPREELDLLECYDSPQVQCLRAYKPRENDELALEKADVVMVTQQSSDGWLEGVRLSDGEQGWFPVQQVEFISNPEVRAQNLKEAHRVKTAKLQLVEQQV.

Disordered regions lie at residues 25–54, 159–274, 316–643, 659–700, 741–810, and 829–1051; these read EGIM…TDGH, VSKE…EQKQ, LRDS…RDGI, SEEF…PPTV, HSHP…PEFY, and VPII…GSSD. A compositionally biased stretch (basic and acidic residues) spans 41–54; sequence QEDRDPSYKWTDGH. A compositionally biased stretch (polar residues) spans 204–221; it reads KQLQLEATQENQGQEGFL. A compositionally biased stretch (acidic residues) spans 228 to 241; the sequence is GLEEQEGQEVEIQE. Composition is skewed to basic and acidic residues over residues 326–336 and 345–380; these read QESREVEERRV and RLVE…DSGD. Serine 446 carries the phosphoserine modification. Over residues 474 to 492 the composition is skewed to basic and acidic residues; that stretch reads LDNRTHNSQQEEFRLRKGI. A compositionally biased stretch (polar residues) spans 496–507; it reads SASTSVAPSGTR. Positions 515-531 are enriched in low complexity; the sequence is PNVFSSTATLSPVSSSV. 5 stretches are compositionally biased toward polar residues: residues 569–595, 603–613, 662–685, 748–760, and 779–791; these read TSDT…NSFP, TPDSLGMSLSF, FTSN…QNSA, TLSS…SKGS, and TPES…TSIP. Positions 829 to 843 are enriched in pro residues; it reads VPIIDPSSEPPPLPP. Composition is skewed to polar residues over residues 867–881, 889–905, and 912–925; these read PNNQ…SVGR, GRST…NNEV, and SNMT…SPTT. Residues serine 953 and serine 969 each carry the phosphoserine modification. Basic and acidic residues predominate over residues 975–986; that stretch reads KNSEKPLHHQLE. Residues serine 1029 and serine 1110 each carry the phosphoserine modification. Residues 1158–1342 form the DH domain; it reads KLQEAKFELI…EKLIRDCNSN (185 aa). Positions 1375–1488 constitute a PH domain; it reads LVKSGELTAL…SALAMPREEL (114 aa). The SH3 domain occupies 1494-1555; it reads YDSPQVQCLR…PVQQVEFISN (62 aa).

In terms of assembly, interacts with SRC. Forms a ternary complex with SRC and the PI3K 85 kDa subunit. Interacts with and is activated by the heterodimer formed by GNB1 and GNG2. Interacts with ODAM (via C-terminus). Interacts with RHOA. Activation of SRC induces tyrosine phosphorylation of ARHGEF5.

The protein localises to the nucleus. Its subcellular location is the cytoplasm. It is found in the cell projection. The protein resides in the podosome. In terms of biological role, guanine nucleotide exchange factor which activates Rho GTPases. Strongly activates RHOA. Also strongly activates RHOB, weakly activates RHOC and RHOG and shows no effect on RHOD, RHOV, RHOQ or RAC1. Involved in regulation of cell shape and actin cytoskeletal organization. Plays a role in actin organization by generating a loss of actin stress fibers and the formation of membrane ruffles and filopodia. Required for SRC-induced podosome formation. Involved in positive regulation of immature dendritic cell migration. This Mus musculus (Mouse) protein is Rho guanine nucleotide exchange factor 5.